Consider the following 204-residue polypeptide: Chaperone protein TorD (204 aa).

Belongs to the TorD/DmsD family. TorD subfamily.

The protein localises to the cytoplasm. Involved in the biogenesis of TorA. Acts on TorA before the insertion of the molybdenum cofactor and, as a result, probably favors a conformation of the apoenzyme that is competent for acquiring the cofactor. The chain is Chaperone protein TorD from Shewanella baltica (strain OS223).